Here is a 98-residue protein sequence, read N- to C-terminus: MSLVYVNVMIAFLISLLGLLMYRSHLMSSLLCLEGMMLSLFILGTIMILNIHFTLASMIPIILLVFAACEAAIGLSLLVMVSNTYGVDYVQNLNLLQC.

Helical transmembrane passes span 1 to 21, 29 to 49, and 61 to 81; these read MSLVYVNVMIAFLISLLGLLM, SLLCLEGMMLSLFILGTIMIL, and IILLVFAACEAAIGLSLLVMV.

It belongs to the complex I subunit 4L family. Core subunit of respiratory chain NADH dehydrogenase (Complex I) which is composed of 45 different subunits.

It is found in the mitochondrion inner membrane. The catalysed reaction is a ubiquinone + NADH + 5 H(+)(in) = a ubiquinol + NAD(+) + 4 H(+)(out). Core subunit of the mitochondrial membrane respiratory chain NADH dehydrogenase (Complex I) which catalyzes electron transfer from NADH through the respiratory chain, using ubiquinone as an electron acceptor. Part of the enzyme membrane arm which is embedded in the lipid bilayer and involved in proton translocation. The polypeptide is NADH-ubiquinone oxidoreductase chain 4L (MT-ND4L) (Urotrichus talpoides (Japanese shrew mole)).